The following is a 147-amino-acid chain: Lipoprotein YafY (147 aa).

The N-terminal stretch at 1–20 (MKRKTLPLLALVATTLFLIA) is a signal peptide. Cysteine 21 carries the N-palmitoyl cysteine lipid modification. Cysteine 21 is lipidated: S-diacylglycerol cysteine.

To E.coli YfjS.

The protein localises to the cell inner membrane. In terms of biological role, when overproduced strongly induces degP through the activation of the two-component envelope stress response system CpxA/CpxR. This Escherichia coli (strain K12) protein is Lipoprotein YafY (yafY).